Consider the following 452-residue polypeptide: Bifunctional protein GlmU (452 aa).

The pyrophosphorylase stretch occupies residues methionine 1 to lysine 224. UDP-N-acetyl-alpha-D-glucosamine contacts are provided by residues leucine 6 to glycine 9, lysine 20, glutamine 71, glycine 76 to threonine 77, tyrosine 98 to aspartate 100, glycine 135, glutamate 149, asparagine 164, and asparagine 222. Aspartate 100 lines the Mg(2+) pocket. Residue asparagine 222 participates in Mg(2+) binding. The segment at valine 225–glutamine 245 is linker. The tract at residues glycine 246–lysine 452 is N-acetyltransferase. Residues arginine 328 and lysine 346 each coordinate UDP-N-acetyl-alpha-D-glucosamine. Histidine 358 acts as the Proton acceptor in catalysis. 2 residues coordinate UDP-N-acetyl-alpha-D-glucosamine: tyrosine 361 and asparagine 372. Residues alanine 375, asparagine 381–tyrosine 382, serine 400, alanine 418, and arginine 435 contribute to the acetyl-CoA site.

This sequence in the N-terminal section; belongs to the N-acetylglucosamine-1-phosphate uridyltransferase family. In the C-terminal section; belongs to the transferase hexapeptide repeat family. Homotrimer. Requires Mg(2+) as cofactor.

It localises to the cytoplasm. The catalysed reaction is alpha-D-glucosamine 1-phosphate + acetyl-CoA = N-acetyl-alpha-D-glucosamine 1-phosphate + CoA + H(+). It catalyses the reaction N-acetyl-alpha-D-glucosamine 1-phosphate + UTP + H(+) = UDP-N-acetyl-alpha-D-glucosamine + diphosphate. It functions in the pathway nucleotide-sugar biosynthesis; UDP-N-acetyl-alpha-D-glucosamine biosynthesis; N-acetyl-alpha-D-glucosamine 1-phosphate from alpha-D-glucosamine 6-phosphate (route II): step 2/2. It participates in nucleotide-sugar biosynthesis; UDP-N-acetyl-alpha-D-glucosamine biosynthesis; UDP-N-acetyl-alpha-D-glucosamine from N-acetyl-alpha-D-glucosamine 1-phosphate: step 1/1. The protein operates within bacterial outer membrane biogenesis; LPS lipid A biosynthesis. In terms of biological role, catalyzes the last two sequential reactions in the de novo biosynthetic pathway for UDP-N-acetylglucosamine (UDP-GlcNAc). The C-terminal domain catalyzes the transfer of acetyl group from acetyl coenzyme A to glucosamine-1-phosphate (GlcN-1-P) to produce N-acetylglucosamine-1-phosphate (GlcNAc-1-P), which is converted into UDP-GlcNAc by the transfer of uridine 5-monophosphate (from uridine 5-triphosphate), a reaction catalyzed by the N-terminal domain. The sequence is that of Bifunctional protein GlmU from Janthinobacterium sp. (strain Marseille) (Minibacterium massiliensis).